We begin with the raw amino-acid sequence, 145 residues long: PAGPFRIPKCRKEFQQAQHLRACQQWLHKQAMQSGSGPSWTLDDEFDFEDDMENPQGPQQRPPLLQQCCNELHQEEPLCVCPTLKGASKAVKQQVRQQLGQQGQQGPHLQHVISRIYQTATHLPKVCNIRQVSVCPFKKTMPGPS.

The segment at 34–62 is disordered; that stretch reads SGSGPSWTLDDEFDFEDDMENPQGPQQRP. Residues 40-54 constitute a propeptide that is removed on maturation; that stretch reads WTLDDEFDFEDDMEN. Residues 42–53 are compositionally biased toward acidic residues; the sequence is LDDEFDFEDDME.

The protein belongs to the 2S seed storage albumins family. In terms of assembly, the protein consists of two chains linked by disulfide bonds.

Functionally, this is a 2S seed storage protein. The sequence is that of Allergen Sin a 1 from Sinapis alba (White mustard).